The following is a 103-amino-acid chain: MLASIPTEHGLYLAAALFILGLIGVLVRRNLIFMLLSLEIMLNATGLAFIVAGARWGEAEGQIMFMLILTLAAAEAAVALALILLVYRRFGTLDADRLSRMRG.

A run of 3 helical transmembrane segments spans residues 7-27, 31-51, and 65-85; these read TEHGLYLAAALFILGLIGVLV, LIFMLLSLEIMLNATGLAFIV, and FMLILTLAAAEAAVALALILL.

It belongs to the complex I subunit 4L family. In terms of assembly, NDH-1 is composed of 14 different subunits. Subunits NuoA, H, J, K, L, M, N constitute the membrane sector of the complex.

The protein localises to the cell inner membrane. It catalyses the reaction a quinone + NADH + 5 H(+)(in) = a quinol + NAD(+) + 4 H(+)(out). NDH-1 shuttles electrons from NADH, via FMN and iron-sulfur (Fe-S) centers, to quinones in the respiratory chain. The immediate electron acceptor for the enzyme in this species is believed to be ubiquinone. Couples the redox reaction to proton translocation (for every two electrons transferred, four hydrogen ions are translocated across the cytoplasmic membrane), and thus conserves the redox energy in a proton gradient. The protein is NADH-quinone oxidoreductase subunit K of Nitrosococcus oceani (strain ATCC 19707 / BCRC 17464 / JCM 30415 / NCIMB 11848 / C-107).